We begin with the raw amino-acid sequence, 233 residues long: Homeobox protein Hox-B6b (233 aa).

Residues 136 to 141 (IYPWMQ) carry the Antp-type hexapeptide motif. Positions 155-214 (GRRGRQTYTRYQTLELEKEFHFNRYLTRRRRIEISHALCLTERQIKIWFQNRRMKWKKEN) form a DNA-binding region, homeobox. The segment at 213-233 (ENKLLNPSKTPEEEEEAEKKS) is disordered. Over residues 224–233 (EEEEEAEKKS) the composition is skewed to acidic residues.

The protein belongs to the Antp homeobox family.

It is found in the nucleus. In terms of biological role, sequence-specific transcription factor which is part of a developmental regulatory system that provides cells with specific positional identities on the anterior-posterior axis. The protein is Homeobox protein Hox-B6b (hoxb6b) of Takifugu rubripes (Japanese pufferfish).